Consider the following 266-residue polypeptide: Ribosomal RNA small subunit methyltransferase A (266 aa).

Positions 13, 15, 40, 61, 86, and 110 each coordinate S-adenosyl-L-methionine.

The protein belongs to the class I-like SAM-binding methyltransferase superfamily. rRNA adenine N(6)-methyltransferase family. RsmA subfamily.

It localises to the cytoplasm. The catalysed reaction is adenosine(1518)/adenosine(1519) in 16S rRNA + 4 S-adenosyl-L-methionine = N(6)-dimethyladenosine(1518)/N(6)-dimethyladenosine(1519) in 16S rRNA + 4 S-adenosyl-L-homocysteine + 4 H(+). In terms of biological role, specifically dimethylates two adjacent adenosines (A1518 and A1519) in the loop of a conserved hairpin near the 3'-end of 16S rRNA in the 30S particle. May play a critical role in biogenesis of 30S subunits. This Hydrogenovibrio crunogenus (strain DSM 25203 / XCL-2) (Thiomicrospira crunogena) protein is Ribosomal RNA small subunit methyltransferase A.